A 246-amino-acid chain; its full sequence is Probable 2-phosphosulfolactate phosphatase (246 aa).

It belongs to the ComB family. Mg(2+) is required as a cofactor.

The catalysed reaction is (2R)-O-phospho-3-sulfolactate + H2O = (2R)-3-sulfolactate + phosphate. The chain is Probable 2-phosphosulfolactate phosphatase from Nostoc punctiforme (strain ATCC 29133 / PCC 73102).